Consider the following 310-residue polypeptide: Ribosomal RNA small subunit methyltransferase H (310 aa).

Residues 32 to 34, aspartate 52, phenylalanine 79, aspartate 100, and glutamine 107 each bind S-adenosyl-L-methionine; that span reads GGH.

It belongs to the methyltransferase superfamily. RsmH family.

Its subcellular location is the cytoplasm. It carries out the reaction cytidine(1402) in 16S rRNA + S-adenosyl-L-methionine = N(4)-methylcytidine(1402) in 16S rRNA + S-adenosyl-L-homocysteine + H(+). Its function is as follows. Specifically methylates the N4 position of cytidine in position 1402 (C1402) of 16S rRNA. In Geobacillus thermodenitrificans (strain NG80-2), this protein is Ribosomal RNA small subunit methyltransferase H.